The chain runs to 510 residues: Probable RNA-binding protein 46 (510 aa).

The disordered stretch occupies residues 23–42; that stretch reads ENGQRKFGGPPPGWEGPPPP. Over residues 31-42 the composition is skewed to pro residues; that stretch reads GPPPGWEGPPPP. RRM domains lie at 45–123, 125–207, and 220–292; these read REVF…VSLD, CRLF…WAEP, and RVLY…LAKP.

In terms of tissue distribution, expressed in the testis and ovary.

It is found in the cytoplasm. In terms of biological role, essential for male and female fertility, playing a crucial role in regulating germ cell development by ensuring the proper progression of meiosis prophase I. This Danio rerio (Zebrafish) protein is Probable RNA-binding protein 46 (rbm46).